The primary structure comprises 245 residues: tRNA (guanine-N(1)-)-methyltransferase (245 aa).

Residues Gly113 and 133–138 (IGDYVL) each bind S-adenosyl-L-methionine.

The protein belongs to the RNA methyltransferase TrmD family. As to quaternary structure, homodimer.

It localises to the cytoplasm. The enzyme catalyses guanosine(37) in tRNA + S-adenosyl-L-methionine = N(1)-methylguanosine(37) in tRNA + S-adenosyl-L-homocysteine + H(+). In terms of biological role, specifically methylates guanosine-37 in various tRNAs. The polypeptide is tRNA (guanine-N(1)-)-methyltransferase (Oceanobacillus iheyensis (strain DSM 14371 / CIP 107618 / JCM 11309 / KCTC 3954 / HTE831)).